A 253-amino-acid polypeptide reads, in one-letter code: Trans-aconitate 2-methyltransferase (253 aa).

Belongs to the methyltransferase superfamily. Tam family.

It localises to the cytoplasm. It catalyses the reaction trans-aconitate + S-adenosyl-L-methionine = (E)-3-(methoxycarbonyl)pent-2-enedioate + S-adenosyl-L-homocysteine. In terms of biological role, catalyzes the S-adenosylmethionine monomethyl esterification of trans-aconitate. In Azoarcus sp. (strain BH72), this protein is Trans-aconitate 2-methyltransferase.